We begin with the raw amino-acid sequence, 391 residues long: Processive diacylglycerol beta-glucosyltransferase (391 aa).

This sequence belongs to the glycosyltransferase 28 family. UgtP subfamily.

Its subcellular location is the cell membrane. The catalysed reaction is a 1,2-diacyl-3-O-(beta-D-glucopyranosyl)-sn-glycerol + UDP-alpha-D-glucose = a 1,2-diacyl-3-O-(beta-D-Glc-(1-&gt;6)-beta-D-Glc)-sn-glycerol + UDP + H(+). It catalyses the reaction a 1,2-diacyl-sn-glycerol + UDP-alpha-D-glucose = a 1,2-diacyl-3-O-(beta-D-glucopyranosyl)-sn-glycerol + UDP + H(+). It functions in the pathway glycolipid metabolism; diglucosyl-diacylglycerol biosynthesis. Processive glucosyltransferase involved in the biosynthesis of both the bilayer- and non-bilayer-forming membrane glucolipids. Is able to successively transfer two glucosyl residues to diacylglycerol (DAG), thereby catalyzing the formation of beta-monoglucosyl-DAG (3-O-(beta-D-glucopyranosyl)-1,2-diacyl-sn-glycerol) and beta-diglucosyl-DAG (3-O-(beta-D-glucopyranosyl-beta-(1-&gt;6)-D-glucopyranosyl)-1,2-diacyl-sn-glycerol). Beta-diglucosyl-DAG is the predominant glycolipid found in Bacillales and is also used as a membrane anchor for lipoteichoic acid (LTA). This Staphylococcus carnosus (strain TM300) protein is Processive diacylglycerol beta-glucosyltransferase.